Consider the following 515-residue polypeptide: Probable cytosol aminopeptidase (515 aa).

Mn(2+) is bound by residues Lys-277 and Asp-282. The active site involves Lys-289. Mn(2+)-binding residues include Asp-300, Asp-359, and Glu-361. The active site involves Arg-363.

The protein belongs to the peptidase M17 family. Mn(2+) is required as a cofactor.

Its subcellular location is the cytoplasm. The catalysed reaction is Release of an N-terminal amino acid, Xaa-|-Yaa-, in which Xaa is preferably Leu, but may be other amino acids including Pro although not Arg or Lys, and Yaa may be Pro. Amino acid amides and methyl esters are also readily hydrolyzed, but rates on arylamides are exceedingly low.. It catalyses the reaction Release of an N-terminal amino acid, preferentially leucine, but not glutamic or aspartic acids.. Presumably involved in the processing and regular turnover of intracellular proteins. Catalyzes the removal of unsubstituted N-terminal amino acids from various peptides. The protein is Probable cytosol aminopeptidase of Streptomyces griseus subsp. griseus (strain JCM 4626 / CBS 651.72 / NBRC 13350 / KCC S-0626 / ISP 5235).